The following is a 221-amino-acid chain: DELTA-actitoxin-Ucs1a (221 aa).

The first 19 residues, 1-19 (MNRLIVLCLFVAMIYATIA), serve as a signal peptide directing secretion. The propeptide occupies 20 to 42 (LPKKEDISNDERSISVSKVPVKK). The plays an important role in the hemolytic activity stretch occupies residues 45–54 (AIAGAVIEGA). The N-terminal region stretch occupies residues 53–72 (GAKLTFGILEKILTVLGDIN). The phosphocholine site is built by Ser-96, Val-129, Ser-147, Pro-149, Tyr-175, Tyr-179, and Tyr-180. The trp-rich region, which is important for the binding to lipid membrane stretch occupies residues 147–162 (SVPYDYNLYSNWWNIK). The Cell attachment site, crucial for protein stability motif lies at 186-188 (KGD).

Belongs to the actinoporin family. Sea anemone subfamily. In terms of assembly, octamer or nonamer in membranes. Monomer in the soluble state.

It localises to the secreted. The protein resides in the nematocyst. Its subcellular location is the target cell membrane. In terms of biological role, pore-forming protein that forms cations-selective hydrophilic pores of around 1 nm and causes cytolysis. Pore formation is a multi-step process that involves specific recognition of membrane sphingomyelin (but neither cholesterol nor phosphatidylcholine) using aromatic rich region and adjacent phosphocholine (POC) binding site, firm binding to the membrane (mainly driven by hydrophobic interactions) accompanied by the transfer of the N-terminal region to the lipid-water interface and finally pore formation after oligomerization of monomers. The chain is DELTA-actitoxin-Ucs1a from Urticina crassicornis (Mottled anemone).